Reading from the N-terminus, the 270-residue chain is 23S rRNA (adenosine(1067)-2'-O)-methyltransferase (270 aa).

Residues Arg135, Arg165, Gly218, Ile238, and Leu247 each coordinate S-adenosyl-L-methionine.

Belongs to the class IV-like SAM-binding methyltransferase superfamily. RNA methyltransferase TsnR/AvirB family.

It carries out the reaction adenosine(1067) in 23S rRNA + S-adenosyl-L-methionine = 2'-O-methyladenosine(1067) in 23S rRNA + S-adenosyl-L-homocysteine + H(+). Specifically methylates the adenosine-1067 in 23S ribosomal RNA. Confers resistance to antibiotic thiostrepton. This Streptomyces laurentii protein is 23S rRNA (adenosine(1067)-2'-O)-methyltransferase.